The sequence spans 810 residues: Cell division control protein 48 homolog E (810 aa).

An N-acetylserine modification is found at serine 2. The residue at position 41 (serine 41) is a Phosphoserine. ATP-binding positions include glycine 248–threonine 255 and glycine 521–threonine 528.

The protein belongs to the AAA ATPase family.

The protein localises to the nucleus. Its subcellular location is the cytoplasm. It localises to the cytoskeleton. It is found in the phragmoplast. Functionally, probably functions in cell division and growth processes. Interacts with certain SNAREs as part of specialized membrane fusion events where vesicles from the same organelle fuse (homotypic fusion). The protein is Cell division control protein 48 homolog E (CDC48E) of Arabidopsis thaliana (Mouse-ear cress).